A 120-amino-acid chain; its full sequence is uncharacterized protein (120 aa).

A VOC domain is found at 4–120; it reads QIGTVAVYVE…EDGNVFLLKE (117 aa).

This is an uncharacterized protein from Bacillus subtilis (strain 168).